The sequence spans 285 residues: Acetylglutamate kinase (285 aa).

Residues 64–65 (GG), R86, and N179 each bind substrate.

This sequence belongs to the acetylglutamate kinase family. ArgB subfamily.

The protein localises to the plastid. Its subcellular location is the chloroplast. The catalysed reaction is N-acetyl-L-glutamate + ATP = N-acetyl-L-glutamyl 5-phosphate + ADP. It participates in amino-acid biosynthesis; L-arginine biosynthesis; N(2)-acetyl-L-ornithine from L-glutamate: step 2/4. Functionally, catalyzes the ATP-dependent phosphorylation of N-acetyl-L-glutamate. This Pyropia yezoensis (Susabi-nori) protein is Acetylglutamate kinase.